The sequence spans 594 residues: Zinc finger protein 37 (594 aa).

The tract at residues 1 to 253 (MATSEPAESD…KPEKAPGSGK (253 aa)) is disordered. Thr-3 carries the post-translational modification Phosphothreonine. One can recognise a KRAB domain in the interval 3–74 (TSEPAESDAV…GKKASPSSLK (72 aa)). Ser-9 is modified (phosphoserine). Residues 10–33 (DAVRAKEWEQLEPVQRDVYKDTKL) show a composition bias toward basic and acidic residues. Over residues 34 to 46 (ENCSNPASMGNQD) the composition is skewed to polar residues. Residues 89–111 (QQDDEHREEKQKSQSKLTKEVTL) show a composition bias toward basic and acidic residues. Residues 145–158 (KSSSRGKNSNQNSD) are compositionally biased toward polar residues. Basic and acidic residues-rich tracts occupy residues 159–172 (SLKKKPDTANDHRK) and 181–234 (VNKD…TGEK). C2H2-type zinc fingers lie at residues 255–277 (YECNHCGKVLSHKQGLLDHQRTH), 283–305 (YECNECGIAFSQKSHLVVHQRTH), 311–324 (YECEQCGKAHGHKH), 339–361 (YKCNECGKTFRHSSNLMQHLRSH), 367–389 (YECKECGKSFRYNSSLTEHVRTH), 395–417 (YECNECGKAFKYGSSLTKHMRIH), 423–445 (FECNECGKTFSKKSHLVIHQRTH), 451–473 (YKCDECGKAFGHSSSLTYHMRTH), 479–501 (FECNQCGKAFKQIEGLTQHQRVH), 507–529 (YECVECGKAFSQKSHLIVHQRTH), 535–557 (FECYECGKAFNAKSQLVIHQRSH), and 563–585 (YECIECGKAFKQNASLTKHMKIH).

This sequence belongs to the krueppel C2H2-type zinc-finger protein family. As to expression, expressed in testis and brain.

The protein localises to the nucleus. May have a role in regulating spermiogenesis. The chain is Zinc finger protein 37 (Zfp37) from Mus musculus (Mouse).